The following is a 397-amino-acid chain: GTPase Obg (397 aa).

The Obg domain occupies 1–159 (MKFVDEATII…RNLRLELKVL (159 aa)). Residues 128-148 (TRFKSSVNRAPRQTSKGSEGE) form a disordered region. Positions 129–144 (RFKSSVNRAPRQTSKG) are enriched in polar residues. Residues 160–333 (ADVGLLGLPN…LVQAVMRWIE (174 aa)) enclose the OBG-type G domain. Residues 166 to 173 (GLPNAGKS), 191 to 195 (FTTLV), 213 to 216 (DIPG), 283 to 286 (NKVD), and 314 to 316 (SAL) contribute to the GTP site. Residues Ser-173 and Thr-193 each contribute to the Mg(2+) site. The span at 336 to 347 (AEQEADNPDFAE) shows a compositional bias: acidic residues. The disordered stretch occupies residues 336–397 (AEQEADNPDF…YDVEVVYAPE (62 aa)). The span at 349–370 (EAARRRRMDEEARQKIEADRQA) shows a compositional bias: basic and acidic residues. The segment covering 378–390 (DDDDDFDDDDYDV) has biased composition (acidic residues).

Belongs to the TRAFAC class OBG-HflX-like GTPase superfamily. OBG GTPase family. Monomer. Requires Mg(2+) as cofactor.

The protein resides in the cytoplasm. Functionally, an essential GTPase which binds GTP, GDP and possibly (p)ppGpp with moderate affinity, with high nucleotide exchange rates and a fairly low GTP hydrolysis rate. Plays a role in control of the cell cycle, stress response, ribosome biogenesis and in those bacteria that undergo differentiation, in morphogenesis control. The chain is GTPase Obg from Marinobacter nauticus (strain ATCC 700491 / DSM 11845 / VT8) (Marinobacter aquaeolei).